Consider the following 161-residue polypeptide: Ribonuclease H (161 aa).

Residues 5–149 (EKLAIAAATD…VDAIAVAFSK (145 aa)) form the RNase H type-1 domain. Mg(2+)-binding residues include D14, E53, D78, and D141.

Belongs to the RNase H family. As to quaternary structure, monomer. It depends on Mg(2+) as a cofactor.

The protein localises to the cytoplasm. It catalyses the reaction Endonucleolytic cleavage to 5'-phosphomonoester.. Functionally, endonuclease that specifically degrades the RNA of RNA-DNA hybrids. The chain is Ribonuclease H from Prochlorococcus marinus (strain NATL1A).